Here is a 363-residue protein sequence, read N- to C-terminus: NAD(P)H-quinone oxidoreductase subunit 1, chloroplastic (363 aa).

The next 6 helical transmembrane spans lie at 30 to 50, 104 to 124, 129 to 149, 248 to 268, 300 to 320, and 343 to 363; these read FLPI…IVWL, IAVI…HLVL, IGVF…LMSG, YSGI…LVSS, VFGT…FLFI, and FLLP…LLSL.

It belongs to the complex I subunit 1 family. In terms of assembly, NDH is composed of at least 16 different subunits, 5 of which are encoded in the nucleus.

The protein localises to the plastid. It is found in the chloroplast thylakoid membrane. It catalyses the reaction a plastoquinone + NADH + (n+1) H(+)(in) = a plastoquinol + NAD(+) + n H(+)(out). The enzyme catalyses a plastoquinone + NADPH + (n+1) H(+)(in) = a plastoquinol + NADP(+) + n H(+)(out). Its function is as follows. NDH shuttles electrons from NAD(P)H:plastoquinone, via FMN and iron-sulfur (Fe-S) centers, to quinones in the photosynthetic chain and possibly in a chloroplast respiratory chain. The immediate electron acceptor for the enzyme in this species is believed to be plastoquinone. Couples the redox reaction to proton translocation, and thus conserves the redox energy in a proton gradient. The sequence is that of NAD(P)H-quinone oxidoreductase subunit 1, chloroplastic from Eucalyptus globulus subsp. globulus (Tasmanian blue gum).